Consider the following 241-residue polypeptide: tRNA pseudouridine synthase A (241 aa).

Residue Asp52 is the Nucleophile of the active site. Tyr110 contacts substrate.

Belongs to the tRNA pseudouridine synthase TruA family. As to quaternary structure, homodimer.

The catalysed reaction is uridine(38/39/40) in tRNA = pseudouridine(38/39/40) in tRNA. Formation of pseudouridine at positions 38, 39 and 40 in the anticodon stem and loop of transfer RNAs. In Aquifex aeolicus (strain VF5), this protein is tRNA pseudouridine synthase A.